The primary structure comprises 473 residues: Photosystem II CP43 reaction center protein (473 aa).

A propeptide spanning residues 1–14 is cleaved from the precursor; it reads MKTLYSLRRFYPVE. An N-acetylthreonine modification is found at Thr-15. Thr-15 carries the post-translational modification Phosphothreonine. Transmembrane regions (helical) follow at residues 69–93, 134–155, 178–200, 255–275, and 291–312; these read LFEVAHFVPEKPMYEQGLILLPHLA, LLGPETLEESFPFFGYVWKDRN, KALYFGGVYDTWAPGGGDVRKIT, KPFAWARRAFVWSGEAYLSYS, and WFNNTAYPSEFYGPTGPEASQA. Glu-367 contacts [CaMn4O5] cluster. A helical membrane pass occupies residues 447-471; it reads RARAAAAGFEKGIDRDFEPVLSMTP.

The protein belongs to the PsbB/PsbC family. PsbC subfamily. In terms of assembly, PSII is composed of 1 copy each of membrane proteins PsbA, PsbB, PsbC, PsbD, PsbE, PsbF, PsbH, PsbI, PsbJ, PsbK, PsbL, PsbM, PsbT, PsbX, PsbY, PsbZ, Psb30/Ycf12, at least 3 peripheral proteins of the oxygen-evolving complex and a large number of cofactors. It forms dimeric complexes. The cofactor is Binds multiple chlorophylls and provides some of the ligands for the Ca-4Mn-5O cluster of the oxygen-evolving complex. It may also provide a ligand for a Cl- that is required for oxygen evolution. PSII binds additional chlorophylls, carotenoids and specific lipids..

It localises to the plastid. It is found in the chloroplast thylakoid membrane. One of the components of the core complex of photosystem II (PSII). It binds chlorophyll and helps catalyze the primary light-induced photochemical processes of PSII. PSII is a light-driven water:plastoquinone oxidoreductase, using light energy to abstract electrons from H(2)O, generating O(2) and a proton gradient subsequently used for ATP formation. The sequence is that of Photosystem II CP43 reaction center protein from Piper cenocladum (Ant piper).